Consider the following 762-residue polypeptide: Primary amine oxidase, liver isozyme (762 aa).

The N-terminal stretch at 1–16 (MFIFIFLSLWTLLVMG) is a signal peptide. The segment at 23–54 (GSEEGVGKQCHPSLPPRCPSRSPSDQPWTHPD) is disordered. N-linked (GlcNAc...) asparagine glycosylation occurs at asparagine 136. Cysteines 197 and 198 form a disulfide. The N-linked (GlcNAc...) asparagine glycan is linked to asparagine 231. 383-393 (YMDSGFGMGYF) contributes to the substrate binding site. Aspartate 385 acts as the Proton acceptor in catalysis. An intrachain disulfide couples cysteine 403 to cysteine 429. 467–472 (MLNYDY) is a binding site for substrate. Tyrosine 470 acts as the Schiff-base intermediate with substrate; via topaquinone in catalysis. A 2',4',5'-topaquinone modification is found at tyrosine 470. Cu cation is bound by residues histidine 519 and histidine 521. Positions 528, 529, 530, 571, 662, and 664 each coordinate Ca(2+). Asparagine 665 is a glycosylation site (N-linked (GlcNAc...) asparagine). Residues glutamate 666, aspartate 672, and leucine 673 each coordinate Ca(2+). Histidine 683 lines the Cu cation pocket. A disulfide bridge links cysteine 733 with cysteine 740.

The protein belongs to the copper/topaquinone oxidase family. Homodimer; disulfide-linked. It depends on Cu cation as a cofactor. The cofactor is Ca(2+). L-topaquinone is required as a cofactor. Post-translationally, topaquinone (TPQ) is generated by copper-dependent autoxidation of a specific tyrosyl residue. In terms of tissue distribution, liver.

The protein localises to the secreted. The protein resides in the extracellular space. It catalyses the reaction a primary methyl amine + O2 + H2O = an aldehyde + H2O2 + NH4(+). The protein is Primary amine oxidase, liver isozyme of Bos taurus (Bovine).